The chain runs to 120 residues: Protein p14.5 (120 aa).

Disordered stretches follow at residues 1-27 (MADF…LEYD) and 80-120 (REFT…HKSK). Ala2 is subject to N-acetylalanine; by host. A compositionally biased stretch (basic residues) spans 103 to 120 (KPKKKKHLFPKLSSHKSK).

This sequence belongs to the asfivirus structural protein p14.5 family. As to quaternary structure, interacts with the major capsid protein. Interacts with host IRF3; this interaction interferes with the recruitment of IRF3 to TBK1. In terms of processing, acetylated.

The protein localises to the virion. Structural protein required for transport of intracellular particles from the assembly sites to the plasma membrane. Binds to both ssDNA and dsDNA. Suppressed the activation of the cGAS/STING pathway by interfering with the recruitment of IRF3 to TBK1, which in turn suppresses IRF3 phosphorylation, decreasing interferon production. This chain is Protein p14.5, found in Ornithodoros (relapsing fever ticks).